A 360-amino-acid polypeptide reads, in one-letter code: Tubulin-like protein CetZ2 (360 aa).

GTP-binding positions include 10-14 (QAGGK), 65-66 (GG), 106-108 (GSG), Glu-138, Asn-165, and Asn-183. Over residues 334 to 354 (EAIDKAETEPREDPKGMWHSD) the composition is skewed to basic and acidic residues. Residues 334-360 (EAIDKAETEPREDPKGMWHSDDLDDLL) form a disordered region.

The protein belongs to the CetZ family.

The protein localises to the cytoplasm. In terms of biological role, involved in cell shape control. This Haloferax volcanii (strain ATCC 29605 / DSM 3757 / JCM 8879 / NBRC 14742 / NCIMB 2012 / VKM B-1768 / DS2) (Halobacterium volcanii) protein is Tubulin-like protein CetZ2.